Consider the following 339-residue polypeptide: Ketol-acid reductoisomerase (NADP(+)) (339 aa).

Residues 1-182 form the KARI N-terminal Rossmann domain; it reads MRVYYDRDAD…GGGRAGIIET (182 aa). Residues 24 to 27, arginine 48, serine 51, serine 53, and 83 to 86 each bind NADP(+); these read YGSQ and DELQ. Histidine 108 is a catalytic residue. Glycine 134 is a binding site for NADP(+). The KARI C-terminal knotted domain occupies 183 to 328; sequence TFREECETDL…AKLRDMMPWI (146 aa). The Mg(2+) site is built by aspartate 191, glutamate 195, glutamate 227, and glutamate 231. Position 252 (serine 252) interacts with substrate.

This sequence belongs to the ketol-acid reductoisomerase family. Mg(2+) is required as a cofactor.

The catalysed reaction is (2R)-2,3-dihydroxy-3-methylbutanoate + NADP(+) = (2S)-2-acetolactate + NADPH + H(+). The enzyme catalyses (2R,3R)-2,3-dihydroxy-3-methylpentanoate + NADP(+) = (S)-2-ethyl-2-hydroxy-3-oxobutanoate + NADPH + H(+). It participates in amino-acid biosynthesis; L-isoleucine biosynthesis; L-isoleucine from 2-oxobutanoate: step 2/4. Its pathway is amino-acid biosynthesis; L-valine biosynthesis; L-valine from pyruvate: step 2/4. Functionally, involved in the biosynthesis of branched-chain amino acids (BCAA). Catalyzes an alkyl-migration followed by a ketol-acid reduction of (S)-2-acetolactate (S2AL) to yield (R)-2,3-dihydroxy-isovalerate. In the isomerase reaction, S2AL is rearranged via a Mg-dependent methyl migration to produce 3-hydroxy-3-methyl-2-ketobutyrate (HMKB). In the reductase reaction, this 2-ketoacid undergoes a metal-dependent reduction by NADPH to yield (R)-2,3-dihydroxy-isovalerate. In Nitrobacter hamburgensis (strain DSM 10229 / NCIMB 13809 / X14), this protein is Ketol-acid reductoisomerase (NADP(+)).